We begin with the raw amino-acid sequence, 135 residues long: Large ribosomal subunit protein bL21 (135 aa).

The interval Glu114 to Glu135 is disordered. Over residues Thr125–Glu135 the composition is skewed to acidic residues.

This sequence belongs to the bacterial ribosomal protein bL21 family. In terms of assembly, part of the 50S ribosomal subunit. Contacts protein L20.

This protein binds to 23S rRNA in the presence of protein L20. The polypeptide is Large ribosomal subunit protein bL21 (Nostoc punctiforme (strain ATCC 29133 / PCC 73102)).